A 347-amino-acid polypeptide reads, in one-letter code: uncharacterized protein (347 aa).

It belongs to the MG067/MG068/MG395 family.

This is an uncharacterized protein from Mycoplasma pneumoniae (strain ATCC 29342 / M129 / Subtype 1) (Mycoplasmoides pneumoniae).